The following is a 475-amino-acid chain: Ribulose bisphosphate carboxylase large chain (475 aa).

Positions 1–2 (MS) are excised as a propeptide. Pro-3 bears the N-acetylproline mark. Lys-14 bears the N6,N6,N6-trimethyllysine mark. The substrate site is built by Asn-123 and Thr-173. Lys-175 serves as the catalytic Proton acceptor. Position 177 (Lys-177) interacts with substrate. Mg(2+) contacts are provided by Lys-201, Asp-203, and Glu-204. Position 201 is an N6-carboxylysine (Lys-201). The active-site Proton acceptor is His-294. Residues Arg-295, His-327, and Ser-379 each coordinate substrate.

This sequence belongs to the RuBisCO large chain family. Type I subfamily. Heterohexadecamer of 8 large chains and 8 small chains; disulfide-linked. The disulfide link is formed within the large subunit homodimers. Mg(2+) is required as a cofactor. In terms of processing, the disulfide bond which can form in the large chain dimeric partners within the hexadecamer appears to be associated with oxidative stress and protein turnover.

It localises to the plastid. The protein resides in the chloroplast. The catalysed reaction is 2 (2R)-3-phosphoglycerate + 2 H(+) = D-ribulose 1,5-bisphosphate + CO2 + H2O. It carries out the reaction D-ribulose 1,5-bisphosphate + O2 = 2-phosphoglycolate + (2R)-3-phosphoglycerate + 2 H(+). In terms of biological role, ruBisCO catalyzes two reactions: the carboxylation of D-ribulose 1,5-bisphosphate, the primary event in carbon dioxide fixation, as well as the oxidative fragmentation of the pentose substrate in the photorespiration process. Both reactions occur simultaneously and in competition at the same active site. The protein is Ribulose bisphosphate carboxylase large chain of Viscum album (European mistletoe).